We begin with the raw amino-acid sequence, 503 residues long: Lithocholate 6-beta-hydroxylase (503 aa).

C442 serves as a coordination point for heme.

The protein belongs to the cytochrome P450 family. The cofactor is heme.

It is found in the endoplasmic reticulum membrane. The protein localises to the microsome membrane. It catalyses the reaction lithocholate + reduced [NADPH--hemoprotein reductase] + O2 = 6beta-hydroxylithocholate + oxidized [NADPH--hemoprotein reductase] + H2O + H(+). In terms of biological role, catalyzes the 6 beta-hydroxylation of lithocholic acid and steroid hormones. This Mesocricetus auratus (Golden hamster) protein is Lithocholate 6-beta-hydroxylase (CYP3A10).